The following is a 294-amino-acid chain: MALSFFFLAISLGSPTAIGDVSFDLSTATKKSYSSFITQLRDALPTQGTVCGIPLLPSTASGSQWFRFFNLTNYNDETVTVAVNVTNVYIVAYRADAVSYFFEDTPAEAFKLIFAGTKTVKLPYSGNYDKLQSVVGKQRDMIELGIPALSSAITNMVYYDYQSTAAALLVLIQCTAEAARYKYIEQQVSSHISSNFYPNQAVISLENKWGALSKQIQIANRTGHGQFENPVELYNPDGTRFSVTNTSAGVVKGNIKLLLYYKASVGSEYDIPTTILHPGAMGMLHNQNGNYVTM.

The N-terminal stretch at 1-19 (MALSFFFLAISLGSPTAIG) is a signal peptide. N-linked (GlcNAc...) asparagine glycosylation is present at N70. Catalysis depends on residues E177 and R180. Residue N220 is glycosylated (N-linked (GlcNAc...) asparagine). A propeptide spanning residues 265–294 (VGSEYDIPTTILHPGAMGMLHNQNGNYVTM) is cleaved from the precursor.

It belongs to the ribosome-inactivating protein family. Type 1 RIP subfamily.

The enzyme catalyses Endohydrolysis of the N-glycosidic bond at one specific adenosine on the 28S rRNA.. In terms of biological role, inhibits protein synthesis by depurinating 28S rRNA in ribosomes. The sequence is that of Type I ribosome-inactivating protein trichoanguina (TCA) from Trichosanthes anguina (Snake gourd).